A 375-amino-acid polypeptide reads, in one-letter code: MRKHAKKIIRIIKMKLKLVAVAVTSLLAAGVVNAAEVYNKDGNKLDLYGKVHAQHYFSDDNGSDGDKTYARLGFKGETQINDQLTGFGQWEYEFKGNRTESQGADKDKTRLAFAGLKFADYGSFDYGRNYGVAYDIGAWTDVLPEFGGDTWTQTDVFMTGRTTGVATYRNTDFFGLVEGLNFAAQYQGKNDRDGAYESNGDGFGLSATYEYEGFGVGAAYAKSDRTNNQVKAASNLNAAGKNAEVWAAGLKYDANNIYLATTYSETLNMTTFGEDAAGDAFIANKTQNFEAVAQYQFDFGLRPSIAYLKSKGKNLGTYGDQDLVEYIDVGATYYFNKNMSTFVDYKINLLDDSDFTKAAKVSTDNIVAVGLNYQF.

Residues 1-34 form the signal peptide; that stretch reads MRKHAKKIIRIIKMKLKLVAVAVTSLLAAGVVNA.

This sequence belongs to the Gram-negative porin family. Homotrimer. Mixed heterotrimers with other porins are also probable.

It is found in the cell outer membrane. Functionally, forms pores that allow passive diffusion of small molecules across the outer membrane. In Salmonella typhimurium (strain SL1344), this protein is Outer membrane porin OmpD.